The chain runs to 296 residues: Fructose-bisphosphate aldolase class 1 (296 aa).

The active-site Proton acceptor is E175. K212 (schiff-base intermediate with dihydroxyacetone-P) is an active-site residue.

Belongs to the class I fructose-bisphosphate aldolase family.

The catalysed reaction is beta-D-fructose 1,6-bisphosphate = D-glyceraldehyde 3-phosphate + dihydroxyacetone phosphate. The protein operates within carbohydrate degradation; glycolysis; D-glyceraldehyde 3-phosphate and glycerone phosphate from D-glucose: step 4/4. This Staphylococcus carnosus (strain TM300) protein is Fructose-bisphosphate aldolase class 1 (fda).